A 463-amino-acid chain; its full sequence is Perilipin-5 (463 aa).

An interaction with LIPE region spans residues 1 to 108 (MSEEEAAQIP…KLEEKLPFLQ (108 aa)). The tract at residues 1–173 (MSEEEAAQIP…HFLPMTEEEL (173 aa)) is essential for lipid droplet targeting. Phosphoserine is present on residues S2, S148, and S322. An interaction with PNPLA2 and ABHD5 region spans residues 185–463 (VGSVEDQRRQ…KHTLMPELDF (279 aa)). Positions 444 to 463 (QEPETPSCPVKHTLMPELDF) are recruits mitochondria at the lipid droplet surface.

This sequence belongs to the perilipin family. In terms of assembly, homooligomer. Interacts with PNPLA2; prevents interaction of PNPLA2 with ABHD5. Interacts with ABHD5; targets ABHD5 to lipid droplets and promotes interaction of ABHD5 with PNPLA2. Interacts with LIPE. Post-translationally, phosphorylated by PKA. Phosphorylated on serine in skeletal muscle at rest or upon lipolytic stimulation. As to expression, expressed in skeletal muscle, liver, heart and kidney.

It localises to the lipid droplet. The protein localises to the cytoplasm. It is found in the mitochondrion. Its function is as follows. Lipid droplet-associated protein that maintains the balance between lipogenesis and lipolysis and also regulates fatty acid oxidation in oxidative tissues. Recruits mitochondria to the surface of lipid droplets and is involved in lipid droplet homeostasis by regulating both the storage of fatty acids in the form of triglycerides and the release of fatty acids for mitochondrial fatty acid oxidation. In lipid droplet triacylglycerol hydrolysis, plays a role as a scaffolding protein for three major key lipolytic players: ABHD5, PNPLA2 and LIPE. Reduces the triacylglycerol hydrolase activity of PNPLA2 by recruiting and sequestering PNPLA2 to lipid droplets. Phosphorylation by PKA enables lipolysis probably by promoting release of ABHD5 from the perilipin scaffold and by facilitating interaction of ABHD5 with PNPLA2. Also increases lipolysis through interaction with LIPE and upon PKA-mediated phosphorylation of LIPE. This chain is Perilipin-5 (PLIN5), found in Homo sapiens (Human).